Reading from the N-terminus, the 2458-residue chain is Acetyl-CoA carboxylase 2 (2458 aa).

Serine 35 carries the phosphoserine modification. Positions 35 to 155 (SKSEANLIPS…SPSKEDKKQA (121 aa)) are disordered. The segment covering 51-60 (SDNSGETPQR) has biased composition (polar residues). Position 70 is a phosphothreonine (threonine 70). The span at 77-87 (ASHKGPKDAGR) shows a compositional bias: basic and acidic residues. Residues serine 91 and serine 95 each carry the phosphoserine modification. Polar residues predominate over residues 103-146 (PLSSSDAAPSPELQANGTGTQGLEATDTNGLSSSARPQGQQAGS). Phosphoserine is present on residues serine 169, serine 175, serine 192, serine 195, and serine 200. Residues 174 to 193 (SSDEDSVAGSSRESTRKGSR) are disordered. Threonine 207 bears the Phosphothreonine mark. Serine 220 is subject to Phosphoserine. At serine 222 the chain carries Phosphoserine; by AMPK. One can recognise a Biotin carboxylation domain in the interval 259–761 (VIEKVLIANN…DTGWLDYLIA (503 aa)). The 196-residue stretch at 414–609 (DDLQQGKRIS…LPAAQLQIAM (196 aa)) folds into the ATP-grasp domain. 458 to 463 (GGGGKG) contacts ATP. Residue serine 469 is modified to Phosphoserine. Mg(2+)-binding residues include glutamate 567, glutamate 580, and asparagine 582. 3 residues coordinate Mn(2+): glutamate 567, glutamate 580, and asparagine 582. The active site involves arginine 584. Threonine 753 is modified (phosphothreonine). The region spanning 888–962 (FEKENDPTVL…EAGCVVARLE (75 aa)) is the Biotinyl-binding domain. The residue at position 929 (lysine 929) is an N6-biotinyllysine. Serine 1340 is subject to Phosphoserine. A Phosphothreonine modification is found at threonine 1342. Phosphoserine is present on residues serine 1360 and serine 1405. Residues 1695–2025 (PYVTKDLLQA…DNHSPVPIIT (331 aa)) enclose the CoA carboxyltransferase N-terminal domain. The interval 1695–2345 (PYVTKDLLQA…EDQVKQEILQ (651 aa)) is carboxyltransferase. CoA is bound by residues arginine 1934, lysine 2238, and arginine 2240. The CoA carboxyltransferase C-terminal domain maps to 2029-2345 (PIDREIEFLP…EDQVKQEILQ (317 aa)).

As to quaternary structure, monomer, homodimer, and homotetramer. Forms filamentous polymers. Interacts with MID1IP1; interaction with MID1IP1 promotes oligomerization and increases its activity in a citrate-dependent manner. Biotin serves as cofactor. It depends on Mg(2+) as a cofactor. The cofactor is Mn(2+). Post-translationally, the biotin cofactor is covalently attached to the central biotinyl-binding domain and is required for the catalytic activity. Phosphorylation at Ser-222 by AMPK inactivates the enzyme. Required for the maintenance of skeletal muscle lipid and glucose homeostasis. As to expression, widely expressed with highest levels in heart, skeletal muscle, liver, adipose tissue, mammary gland, adrenal gland and colon. Isoform 3 is expressed in skeletal muscle, adipose tissue and liver (at protein level). Isoform 3 is detected at high levels in adipose tissue with lower levels in heart, liver, skeletal muscle and testis.

It is found in the mitochondrion. It carries out the reaction hydrogencarbonate + acetyl-CoA + ATP = malonyl-CoA + ADP + phosphate + H(+). The protein operates within lipid metabolism; malonyl-CoA biosynthesis; malonyl-CoA from acetyl-CoA: step 1/1. Its activity is regulated as follows. Activity is increased by oligomerization of the protein into filaments. The oligomerization and the activity of the enzyme are inhibited by phosphorylation at Ser-222. Inhibited by its product, malonyl-CoA. Activated by citrate. Activation by MID1IP1 is citrate-dependent. Soraphen A, inhibits the enzyme by preventing the formation of active filamentous oligomers. Functionally, mitochondrial enzyme that catalyzes the carboxylation of acetyl-CoA to malonyl-CoA and plays a central role in fatty acid metabolism. Catalyzes a 2 steps reaction starting with the ATP-dependent carboxylation of the biotin carried by the biotin carboxyl carrier (BCC) domain followed by the transfer of the carboxyl group from carboxylated biotin to acetyl-CoA. Through the production of malonyl-CoA that allosterically inhibits carnitine palmitoyltransferase 1 at the mitochondria, negatively regulates fatty acid oxidation. Together with its cytosolic isozyme ACACA, which is involved in de novo fatty acid biosynthesis, promotes lipid storage. This Homo sapiens (Human) protein is Acetyl-CoA carboxylase 2.